A 394-amino-acid polypeptide reads, in one-letter code: Monoterpene synthase FDS-5, chloroplastic (394 aa).

The N-terminal 65 residues, 1–65, are a transit peptide targeting the chloroplast; it reads MASFISLSSK…NLNSQFMQVY (65 aa). Residues lysine 100, arginine 103, and glutamine 138 each coordinate isopentenyl diphosphate. Mg(2+)-binding residues include aspartate 145 and aspartate 149. The short motif at 145-149 is the DDXXD motif element; sequence DDMMD. Arginine 154 serves as a coordination point for dimethylallyl diphosphate. Position 155 (arginine 155) interacts with isopentenyl diphosphate. Lysine 242, glutamine 281, lysine 298, and lysine 307 together coordinate dimethylallyl diphosphate.

The protein belongs to the FPP/GGPP synthase family. Mg(2+) is required as a cofactor. Mn(2+) serves as cofactor.

It localises to the plastid. The protein localises to the chloroplast. The enzyme catalyses isopentenyl diphosphate + dimethylallyl diphosphate = (2E)-geranyl diphosphate + diphosphate. The catalysed reaction is 2 dimethylallyl diphosphate = (R,R)-chrysanthemyl diphosphate + diphosphate. It carries out the reaction 2 dimethylallyl diphosphate = (R)-lavandulyl diphosphate + diphosphate. Functionally, condenses two molecules of dimethylallyl diphosphate (DMAPP) to produce mainly an irregular monoterpene, chrysanthemyl diphosphate (CPP) and lower amounts of a branched monoterpene, lavandulyl diphosphate (LPP). CPP is a precursor of the pyrethrin insecticides. When incubated with isopentenyl diphosphate (IPP) and DMAPP, catalyzes three competing isoprenoid condensation reactions, a chain elongation to give geranyl diphosphate (GPP), a cyclopropanation to give CPP and a branching to give LPP. This is Monoterpene synthase FDS-5, chloroplastic (FDS-5) from Artemisia spiciformis (Spiked big sagebrush).